A 273-amino-acid polypeptide reads, in one-letter code: Putative ABC transporter ATP-binding protein DVU_1056 (273 aa).

The region spanning 10-242 (LSLDDIHFTY…IHHGGEVAHE (233 aa)) is the ABC transporter domain. 44-51 (GHNGSGKT) lines the ATP pocket. The disordered stretch occupies residues 234–273 (HHGGEVAHEHPSRGCCHQHDGSHHHAGHDDDHPHTSQTTE). A compositionally biased stretch (basic and acidic residues) spans 235–267 (HGGEVAHEHPSRGCCHQHDGSHHHAGHDDDHPH).

This sequence belongs to the ABC transporter superfamily.

It is found in the cell inner membrane. Its function is as follows. Probably part of an ABC transporter complex. Responsible for energy coupling to the transport system. The polypeptide is Putative ABC transporter ATP-binding protein DVU_1056 (Nitratidesulfovibrio vulgaris (strain ATCC 29579 / DSM 644 / CCUG 34227 / NCIMB 8303 / VKM B-1760 / Hildenborough) (Desulfovibrio vulgaris)).